Here is a 97-residue protein sequence, read N- to C-terminus: Ferredoxin-3 (97 aa).

4Fe-4S ferredoxin-type domains are found at residues 18–47 (FAESIDKDKCIGCGRCIKVCGYPVLDLKAL) and 65–95 (KVMVVAHPENCIGCQACARICPKNCYTHNPL). Residues Cys-27, Cys-30, Cys-33, Cys-37, Cys-75, Cys-78, Cys-81, and Cys-85 each coordinate [4Fe-4S] cluster.

Homodimer. Requires [4Fe-4S] cluster as cofactor.

Functionally, ferredoxins are iron-sulfur proteins that transfer electrons in a wide variety of metabolic reactions. This Nostoc sp. (strain PCC 7120 / SAG 25.82 / UTEX 2576) protein is Ferredoxin-3 (fdxB).